The following is a 104-amino-acid chain: Large ribosomal subunit protein uL24 (104 aa).

Belongs to the universal ribosomal protein uL24 family. As to quaternary structure, part of the 50S ribosomal subunit.

In terms of biological role, one of two assembly initiator proteins, it binds directly to the 5'-end of the 23S rRNA, where it nucleates assembly of the 50S subunit. Its function is as follows. One of the proteins that surrounds the polypeptide exit tunnel on the outside of the subunit. The sequence is that of Large ribosomal subunit protein uL24 from Shewanella sp. (strain W3-18-1).